Here is a 462-residue protein sequence, read N- to C-terminus: Cell wall mannoprotein 1 (462 aa).

Residues 1 to 18 (MKFLSSLVVLGLSAQALA) form the signal peptide. Position 313 (Ser313) interacts with hexadecanoate. The disordered stretch occupies residues 346–429 (FAGTGPAPTT…SVPAAPTGGN (84 aa)). Residues 347-366 (AGTGPAPTTSSTPEASTAPA) are compositionally biased toward low complexity. The segment covering 399–420 (VWPTSTTASPDVQPTITSSGTS) has biased composition (polar residues).

This sequence belongs to the cell wall mannoprotein 1 family. Monomer. In terms of processing, mannoprotein, glycosylated.

It is found in the secreted. The protein resides in the cell wall. In terms of biological role, constitutive protein of the cell wall. Binds fatty acids and may thus serve as a fatty acid transporter between P.marneffei and host cells during infection. Abundant antigen target of host humoral immune response. The protein is Cell wall mannoprotein 1 of Talaromyces marneffei (Penicillium marneffei).